We begin with the raw amino-acid sequence, 137 residues long: Actin-depolymerizing factor 12 (137 aa).

Ser-6 carries the post-translational modification Phosphoserine. The ADF-H domain occupies 7–137; the sequence is GMAVEDECKL…SLDIIKSRAL (131 aa).

Belongs to the actin-binding proteins ADF family. In terms of tissue distribution, specifically expressed in pollen.

The protein resides in the cytoplasm. Its subcellular location is the cytoskeleton. Its function is as follows. Actin-depolymerizing protein. Severs actin filaments (F-actin) and binds to actin monomers. The chain is Actin-depolymerizing factor 12 from Arabidopsis thaliana (Mouse-ear cress).